The following is a 574-amino-acid chain: Serine/threonine-protein kinase rio1 (574 aa).

The region spanning 171-462 (LMLFKMINKG…GRDIFYQNLT (292 aa)) is the Protein kinase domain. ATP is bound by residues Lys-211 and Ile-283. The active-site Proton acceptor is Asp-327. Positions 332 and 344 each coordinate Mg(2+). The 4-aspartylphosphate intermediate role is filled by Asp-344. The segment covering 474 to 488 (KNDLINDSNENKDSD) has biased composition (basic and acidic residues). Disordered stretches follow at residues 474–513 (KNDL…DDEK) and 538–574 (RKKF…GKKK). The span at 489–511 (DSSSDSSEDSDDDSDSDQLNEDD) shows a compositional bias: acidic residues. Residues 548–574 (ERRKTKIPKHIKKLTKKRKAEKFGKKK) are compositionally biased toward basic residues.

The protein belongs to the protein kinase superfamily. RIO-type Ser/Thr kinase family. Requires Mg(2+) as cofactor.

The protein resides in the cytoplasm. It catalyses the reaction L-seryl-[protein] + ATP = O-phospho-L-seryl-[protein] + ADP + H(+). It carries out the reaction L-threonyl-[protein] + ATP = O-phospho-L-threonyl-[protein] + ADP + H(+). The catalysed reaction is ATP + H2O = ADP + phosphate + H(+). Required for the final endonucleolytic cleavage at site D converting 20S pre-rRNA into the mature 18S rRNA. Required for the final steps of cytoplasmic maturation of the 40S ribosomal subunit. Despite the protein kinase domain is proposed to act predominantly as an ATPase. The sequence is that of Serine/threonine-protein kinase rio1 (rio1) from Dictyostelium discoideum (Social amoeba).